The sequence spans 448 residues: Phosphoglucosamine mutase (448 aa).

The active-site Phosphoserine intermediate is the S100. Residues S100, D240, D242, and D244 each coordinate Mg(2+). Phosphoserine is present on S100.

Belongs to the phosphohexose mutase family. The cofactor is Mg(2+). In terms of processing, activated by phosphorylation.

It carries out the reaction alpha-D-glucosamine 1-phosphate = D-glucosamine 6-phosphate. Its function is as follows. Catalyzes the conversion of glucosamine-6-phosphate to glucosamine-1-phosphate. The sequence is that of Phosphoglucosamine mutase from Geobacillus thermodenitrificans (strain NG80-2).